We begin with the raw amino-acid sequence, 334 residues long: Malate dehydrogenase, cytoplasmic (334 aa).

11–17 (GAAGQIA) lines the NAD(+) pocket. Substrate contacts are provided by Arg92 and Arg98. NAD(+)-binding positions include Asn105, Gln112, and 129–131 (VGN). Substrate contacts are provided by Asn131 and Arg162. His187 (proton acceptor) is an active-site residue.

It belongs to the LDH/MDH superfamily. MDH type 2 family. In terms of assembly, homodimer.

It is found in the cytoplasm. Its subcellular location is the cytosol. It carries out the reaction (S)-malate + NAD(+) = oxaloacetate + NADH + H(+). The catalysed reaction is (S)-2-hydroxyglutarate + NAD(+) = 2-oxoglutarate + NADH + H(+). In terms of biological role, catalyzes the reduction of aromatic alpha-keto acids in the presence of NADH. Plays essential roles in the malate-aspartate shuttle and the tricarboxylic acid cycle, important in mitochondrial NADH supply for oxidative phosphorylation. Catalyzes the reduction of 2-oxoglutarate to 2-hydroxyglutarate, leading to elevated reactive oxygen species (ROS). The sequence is that of Malate dehydrogenase, cytoplasmic (MDH1) from Gallus gallus (Chicken).